A 365-amino-acid polypeptide reads, in one-letter code: Class I histocompatibility antigen, B alpha chain (365 aa).

Positions 1-24 (MTVMAPRTLLLLLSGALVLTETWA) are cleaved as a signal peptide. An alpha-1 region spans residues 25-114 (GSHSMRYFST…ALGYYNQSEA (90 aa)). Residues 25-308 (GSHSMRYFST…EPPSQPTIPI (284 aa)) are Extracellular-facing. An N-linked (GlcNAc...) asparagine glycan is attached at N110. The interval 115–206 (GSHTIQMMSG…ENGKETLQRA (92 aa)) is alpha-2. Intrachain disulfides connect C125–C188 and C227–C283. The alpha-3 stretch occupies residues 207-298 (EPPKTHVTHH…GLPEPLTLRW (92 aa)). An Ig-like C1-type domain is found at 209–297 (PKTHVTHHPV…EGLPEPLTLR (89 aa)). The tract at residues 299 to 308 (EPPSQPTIPI) is connecting peptide. The chain crosses the membrane as a helical span at residues 309-332 (MGIVAILAILGAVVTGAVVTAVMW). Residues 333 to 365 (RKKSSDKKGGSYSQAARSDSAQGSDVSLTACKV) lie on the Cytoplasmic side of the membrane. The tract at residues 337–361 (SDKKGGSYSQAARSDSAQGSDVSLT) is disordered. Positions 346–359 (QAARSDSAQGSDVS) are enriched in polar residues. S356 and S359 each carry phosphoserine.

This sequence belongs to the MHC class I family. As to quaternary structure, heterodimer of an alpha chain and a beta chain (beta-2-microglobulin).

It is found in the membrane. Functionally, involved in the presentation of foreign antigens to the immune system. The polypeptide is Class I histocompatibility antigen, B alpha chain (Saguinus oedipus (Cotton-top tamarin)).